A 328-amino-acid chain; its full sequence is Phosphate acyltransferase (328 aa).

It belongs to the PlsX family. In terms of assembly, homodimer. Probably interacts with PlsY.

It is found in the cytoplasm. The enzyme catalyses a fatty acyl-[ACP] + phosphate = an acyl phosphate + holo-[ACP]. The protein operates within lipid metabolism; phospholipid metabolism. Functionally, catalyzes the reversible formation of acyl-phosphate (acyl-PO(4)) from acyl-[acyl-carrier-protein] (acyl-ACP). This enzyme utilizes acyl-ACP as fatty acyl donor, but not acyl-CoA. In Staphylococcus aureus (strain MSSA476), this protein is Phosphate acyltransferase.